The sequence spans 383 residues: Anhydro-N-acetylmuramic acid kinase (383 aa).

Residue 9 to 16 participates in ATP binding; sequence GTSLDGID.

It belongs to the anhydro-N-acetylmuramic acid kinase family.

The catalysed reaction is 1,6-anhydro-N-acetyl-beta-muramate + ATP + H2O = N-acetyl-D-muramate 6-phosphate + ADP + H(+). The protein operates within amino-sugar metabolism; 1,6-anhydro-N-acetylmuramate degradation. It participates in cell wall biogenesis; peptidoglycan recycling. In terms of biological role, catalyzes the specific phosphorylation of 1,6-anhydro-N-acetylmuramic acid (anhMurNAc) with the simultaneous cleavage of the 1,6-anhydro ring, generating MurNAc-6-P. Is required for the utilization of anhMurNAc either imported from the medium or derived from its own cell wall murein, and thus plays a role in cell wall recycling. The sequence is that of Anhydro-N-acetylmuramic acid kinase from Bacillus cereus (strain ATCC 10987 / NRS 248).